A 1199-amino-acid chain; its full sequence is DNA-directed RNA polymerase subunit beta' (1199 aa).

The Zn(2+) site is built by Cys60, Cys62, Cys75, and Cys78. The Mg(2+) site is built by Asp449, Asp451, and Asp453. Zn(2+) is bound by residues Cys818, Cys892, Cys899, and Cys902.

It belongs to the RNA polymerase beta' chain family. As to quaternary structure, the RNAP catalytic core consists of 2 alpha, 1 beta, 1 beta' and 1 omega subunit. When a sigma factor is associated with the core the holoenzyme is formed, which can initiate transcription. Mg(2+) serves as cofactor. Zn(2+) is required as a cofactor.

It carries out the reaction RNA(n) + a ribonucleoside 5'-triphosphate = RNA(n+1) + diphosphate. Its function is as follows. DNA-dependent RNA polymerase catalyzes the transcription of DNA into RNA using the four ribonucleoside triphosphates as substrates. The polypeptide is DNA-directed RNA polymerase subunit beta' (Geobacillus kaustophilus (strain HTA426)).